A 748-amino-acid chain; its full sequence is Semaphorin-3B (748 aa).

The first 25 residues, 1–25, serve as a signal peptide directing secretion; that stretch reads MGRAEAAAMIPGLALLWVAGLGDTA. Residues 30-512 form the Sema domain; that stretch reads RLRLSFQELQ…SRSAVAQIAL (483 aa). The N-linked (GlcNAc...) asparagine glycan is linked to Asn-82. Cys-102 and Cys-113 are joined by a disulfide. The N-linked (GlcNAc...) asparagine glycan is linked to Asn-124. Cystine bridges form between Cys-131-Cys-140, Cys-268-Cys-379, Cys-292-Cys-339, Cys-515-Cys-533, and Cys-643-Cys-709. The region spanning 561 to 659 is the Ig-like C2-type domain; the sequence is PSTLCSGDSS…FSQPLRRLVL (99 aa). Positions 708–748 are disordered; the sequence is MCRPQPGHHSVAADSRRKGRNRRMHVSELRAERGPRSAAHW. Residues 732–742 show a composition bias toward basic and acidic residues; the sequence is HVSELRAERGP.

This sequence belongs to the semaphorin family.

It localises to the secreted. Its function is as follows. Inhibits axonal extension by providing local signals to specify territories inaccessible for growing axons. The chain is Semaphorin-3B (Sema3b) from Mus musculus (Mouse).